We begin with the raw amino-acid sequence, 1620 residues long: ABC-type organic anion transporter ABCA8A (1620 aa).

Helical transmembrane passes span Thr30 to Leu50, Cys224 to Val244, Ser263 to Leu283, Val294 to Ile314, Phe328 to Ala348, Leu357 to Leu377, and Ile397 to Phe417. N-linked (GlcNAc...) asparagine glycosylation is found at Asn454 and Asn482. Residues Ile478 to Gln713 enclose the ABC transporter 1 domain. Gly514–Ser521 contacts ATP. The helical transmembrane segment at Ile861–Tyr881 threads the bilayer. An N-linked (GlcNAc...) asparagine glycan is attached at Asn967. The next 7 membrane-spanning stretches (helical) occupy residues Cys979–Ala999, Tyr1019–Met1039, Ala1068–Ala1088, Ile1105–Ile1125, Ser1133–Ile1153, Ile1159–Leu1179, and Glu1196–Leu1216. The ABC transporter 2 domain occupies Leu1284–Lys1517. An ATP-binding site is contributed by Gly1322–Ser1329.

It belongs to the ABC transporter superfamily. ABCA family. Expressed in lung, heart, liver, skeletal muscle and testis. Highly expressed in the liver, and is also abundant in heart and skeletal muscle. Highly expressed in heart.

Its subcellular location is the cell membrane. The protein resides in the basolateral cell membrane. The enzyme catalyses taurocholate(in) + ATP + H2O = taurocholate(out) + ADP + phosphate + H(+). It carries out the reaction cholesterol(in) + ATP + H2O = cholesterol(out) + ADP + phosphate + H(+). With respect to regulation, cholesterol efflux is increased by extracellularly applied taurocholate. Its function is as follows. Mediates cholesterol and taurocholate efflux. Through the interaction with ABCA1 potentiates the cholesterol efflux to lipid-free APOA1, in turn regulates high-density lipoprotein cholesterol levels. In Mus musculus (Mouse), this protein is ABC-type organic anion transporter ABCA8A.